A 284-amino-acid chain; its full sequence is Two-pore potassium channel 4 (284 aa).

The tract at residues 1–21 (MEEENLLNENLLHPNESSPEE) is disordered. Residues 1–31 (MEEENLLNENLLHPNESSPEETQVTTVSKSK) lie on the Cytoplasmic side of the membrane. The chain crosses the membrane as a helical span at residues 32-52 (WTILVLAMILLLVYLTFGVCT). Positions 70-89 (DAFYFSIVTFSTVGYGDIVP) form an intramembrane region, pore-forming. The helical transmembrane segment at 93 to 113 (TTKILTIVLVSTGVVFLDYLL) threads the bilayer. At 114-156 (NRVVSHVLSLQENAILDRINKTRNRAIRDHIAEDGKIRLKWKL) the chain is on the cytoplasmic side. The chain crosses the membrane as a helical span at residues 157–177 (CLAFCAVGLCVGSGALFLHVF). The segment at residues 184–203 (DSVYLSVISVTTVGYGDKTF) is an intramembrane region (pore-forming). The chain crosses the membrane as a helical span at residues 211-231 (FAVFWLLLSTIAMATLFLYLA). Over 232–284 (EMRIDRTTVMKLPPSESEFIVFKLRESGRISEDDIKQIVREFENLEEVPSSGS) the chain is Cytoplasmic.

The protein belongs to the two pore domain potassium channel (TC 1.A.1.7) family. Homodimer. In terms of tissue distribution, predominantly expressed in pollen.

Its subcellular location is the cell membrane. In terms of biological role, voltage-independent, instantaneously activating, potassium-selective plasma membrane ion channel. Open rectifier. Regulated by cytoplasmic pH and extra-cellular calcium. Has some permeability for Rb(+) and NH(4)(+), but none for Na(+) or Li(+). This Arabidopsis thaliana (Mouse-ear cress) protein is Two-pore potassium channel 4 (TPK4).